The sequence spans 280 residues: UPF0328 protein ECU06_0020/ECU06_1700 (280 aa).

It belongs to the UPF0328 family.

This Encephalitozoon cuniculi (strain GB-M1) (Microsporidian parasite) protein is UPF0328 protein ECU06_0020/ECU06_1700.